The chain runs to 440 residues: Xylose isomerase (440 aa).

Active-site residues include histidine 101 and aspartate 104. Residues glutamate 232, glutamate 268, histidine 271, aspartate 296, aspartate 307, aspartate 309, and aspartate 339 each coordinate Mg(2+).

This sequence belongs to the xylose isomerase family. Homotetramer. Mg(2+) serves as cofactor.

The protein localises to the cytoplasm. The catalysed reaction is alpha-D-xylose = alpha-D-xylulofuranose. The sequence is that of Xylose isomerase from Salmonella paratyphi B (strain ATCC BAA-1250 / SPB7).